Consider the following 100-residue polypeptide: UPF0213 protein YhbQ (100 aa).

Positions 2–77 constitute a GIY-YIG domain; that stretch reads TPWFLYLIRT…KQLTKRQKER (76 aa).

The protein belongs to the UPF0213 family.

The protein is UPF0213 protein YhbQ of Escherichia coli O17:K52:H18 (strain UMN026 / ExPEC).